The primary structure comprises 247 residues: Uridylate kinase (247 aa).

17–20 (KFSG) is an ATP binding site. Gly59 contacts UMP. Residues Gly60 and Arg64 each contribute to the ATP site. UMP contacts are provided by residues Asp79 and 140–147 (TGNPFFTT). The ATP site is built by Thr167, Tyr173, and Asp176.

The protein belongs to the UMP kinase family. In terms of assembly, homohexamer.

The protein resides in the cytoplasm. The catalysed reaction is UMP + ATP = UDP + ADP. It functions in the pathway pyrimidine metabolism; CTP biosynthesis via de novo pathway; UDP from UMP (UMPK route): step 1/1. With respect to regulation, inhibited by UTP. Functionally, catalyzes the reversible phosphorylation of UMP to UDP. This is Uridylate kinase from Legionella pneumophila (strain Paris).